We begin with the raw amino-acid sequence, 365 residues long: UDP-N-acetylglucosamine--N-acetylmuramyl-(pentapeptide) pyrophosphoryl-undecaprenol N-acetylglucosamine transferase (365 aa).

Residues 11–13 (TGG), Asn124, Arg165, Ser192, Ile246, and Gln291 each bind UDP-N-acetyl-alpha-D-glucosamine.

It belongs to the glycosyltransferase 28 family. MurG subfamily.

The protein localises to the cell inner membrane. The enzyme catalyses di-trans,octa-cis-undecaprenyl diphospho-N-acetyl-alpha-D-muramoyl-L-alanyl-D-glutamyl-meso-2,6-diaminopimeloyl-D-alanyl-D-alanine + UDP-N-acetyl-alpha-D-glucosamine = di-trans,octa-cis-undecaprenyl diphospho-[N-acetyl-alpha-D-glucosaminyl-(1-&gt;4)]-N-acetyl-alpha-D-muramoyl-L-alanyl-D-glutamyl-meso-2,6-diaminopimeloyl-D-alanyl-D-alanine + UDP + H(+). The protein operates within cell wall biogenesis; peptidoglycan biosynthesis. In terms of biological role, cell wall formation. Catalyzes the transfer of a GlcNAc subunit on undecaprenyl-pyrophosphoryl-MurNAc-pentapeptide (lipid intermediate I) to form undecaprenyl-pyrophosphoryl-MurNAc-(pentapeptide)GlcNAc (lipid intermediate II). The sequence is that of UDP-N-acetylglucosamine--N-acetylmuramyl-(pentapeptide) pyrophosphoryl-undecaprenol N-acetylglucosamine transferase from Nitratidesulfovibrio vulgaris (strain ATCC 29579 / DSM 644 / CCUG 34227 / NCIMB 8303 / VKM B-1760 / Hildenborough) (Desulfovibrio vulgaris).